Here is a 357-residue protein sequence, read N- to C-terminus: DNA replication and repair protein RecF (357 aa).

30–37 (GANGSGKT) provides a ligand contact to ATP.

Belongs to the RecF family.

The protein localises to the cytoplasm. In terms of biological role, the RecF protein is involved in DNA metabolism; it is required for DNA replication and normal SOS inducibility. RecF binds preferentially to single-stranded, linear DNA. It also seems to bind ATP. This chain is DNA replication and repair protein RecF, found in Salmonella agona (strain SL483).